The following is a 404-amino-acid chain: Keratin, type I microfibrillar, 47.6 kDa (404 aa).

Residues 1–56 are head; the sequence is MSFNFCLPNLSFRSSCSSRPCVPSSCCGTTLPGACNIPASVGSCNWFCEGSFNGNE. The IF rod domain occupies 56–367; the sequence is EKETMQFLND…GLLDSEDCKL (312 aa). The interval 57 to 91 is coil 1A; it reads KETMQFLNDRLASYLEKVRQLERENAELERRILER. Residues 92–102 form a linker 1 region; it reads SQQQEPLVCPN. The segment at 103-203 is coil 1B; the sequence is YQSYFRTIEE…HEQEVNTLRS (101 aa). Positions 204–219 are linker 12; sequence QLGDRLNVEVDAAPTV. Positions 220–363 are coil 2; sequence DLNHVLNETR…NTYRGLLDSE (144 aa). Residues 364 to 404 form a tail region; sequence DCKLPCNPCATTNTCGKPIGPCISNPCVSRTRCGPCNTFVH.

Belongs to the intermediate filament family.

In terms of biological role, wool microfibrillar keratin. This is Keratin, type I microfibrillar, 47.6 kDa from Ovis aries (Sheep).